A 187-amino-acid chain; its full sequence is Peptidoglycan-recognition protein 3 (187 aa).

The N-terminal stretch at M1 to A19 is a signal peptide. Intrachain disulfides connect C21–C144 and C58–C64. The N-acetylmuramoyl-L-alanine amidase domain maps to K43–G170. N51 carries an N-linked (GlcNAc...) asparagine glycan.

It belongs to the N-acetylmuramoyl-L-alanine amidase 2 family.

Its subcellular location is the secreted. Its function is as follows. Peptidoglycan-recognition protein probably involved in innate immunity by binding to peptidoglycans (PGN) of bacteria and activating the prophenoloxidase (proPO) cascade immune response. Binds to 1,3-beta-D-glucan and PGN. The protein is Peptidoglycan-recognition protein 3 (PGRP-3) of Holotrichia diomphalia (Korean black chafer).